We begin with the raw amino-acid sequence, 874 residues long: Cellulose synthase catalytic subunit [UDP-forming] (874 aa).

4 consecutive transmembrane segments (helical) span residues 30–50, 151–171, 173–193, and 230–250; these read SPFSAALGCLWTILAWIVFPL, ILGVIVTFSLILALICITQPF, PLSQFIFLLLLWGVALLVRRM, and LVCGLILLFAETYAWIVLVLG. The catalytic subdomain A stretch occupies residues 271–364; sequence QWPTVDIFVP…FVAIFDCDHV (94 aa). D313 is an active-site residue. Positions 360 and 362 each coordinate substrate. Positions 441-501 are catalytic subdomain B; sequence KPLDEIGGIA…GQRIRWARGM (61 aa). D457 is a catalytic residue. 5 helical membrane passes run 525–545, 547–567, 592–612, 634–654, and 668–688; these read LNAMFHFLSGIPRLIFLTAPL, FLLLHAYIIYAPALMIALFVI, IYETVLAWYIAPPTLVALINP, VISRPYIFLVLLNLLGVAAGV, and VIVSLVWVFYNLVILGGAVAV. In terms of domain architecture, PilZ spans 694–790; sequence QVRRAHRVEI…QHIDFVQCTF (97 aa). A helical transmembrane segment spans residues 833-853; it reads SVKVIFRSLTALIAWIVSFIP.

Belongs to the glycosyltransferase 2 family. Requires Mg(2+) as cofactor.

The protein localises to the cell inner membrane. The enzyme catalyses [(1-&gt;4)-beta-D-glucosyl](n) + UDP-alpha-D-glucose = [(1-&gt;4)-beta-D-glucosyl](n+1) + UDP + H(+). It participates in glycan metabolism; bacterial cellulose biosynthesis. Activated by bis-(3'-5') cyclic diguanylic acid (c-di-GMP). In terms of biological role, catalytic subunit of cellulose synthase. It polymerizes uridine 5'-diphosphate glucose to cellulose, which is produced as an extracellular component for mechanical and chemical protection at the onset of the stationary phase, when the cells exhibit multicellular behavior (rdar morphotype). Coexpression of cellulose and thin aggregative fimbriae leads to a hydrophobic network with tightly packed cells embedded in a highly inert matrix. This chain is Cellulose synthase catalytic subunit [UDP-forming] (bcsA), found in Salmonella typhi.